Reading from the N-terminus, the 361-residue chain is C3a anaphylatoxin chemotactic receptor (361 aa).

The Extracellular segment spans residues 1–64 (MQQETQAPPL…FASSEVRVIS (64 aa)). Residues Asn36 and Asn50 are each glycosylated (N-linked (GlcNAc...) asparagine). A helical transmembrane segment spans residues 65–85 (LVVYCLTFLLGVPGNSFVIFI). Topologically, residues 86–96 (AGMKMKRTVNT) are cytoplasmic. Residues 97-117 (IWFLNLATADLLCCLSVPLTV) traverse the membrane as a helical segment. The Extracellular segment spans residues 118–134 (AEILLDHHWPYGYAMCK). Cys133 and Cys210 form a disulfide bridge. A helical transmembrane segment spans residues 135-155 (ILPSVIVISMFASVFTLNIIS). The Cytoplasmic segment spans residues 156-177 (LDRFTQVITPVWAQNHRSLLLA). The helical transmembrane segment at 178 to 198 (RLSCVAVWILALLLSLPFMIL) threads the bilayer. Topologically, residues 199–224 (RRTYEEFNMTVCTFDDDDFTTYGALS) are extracellular. A helical transmembrane segment spans residues 225 to 245 (IVRFVFGFLIPLMSIVTCYGI). At 246–262 (IARKLGSRHFRSGRAFR) the chain is on the cytoplasmic side. The chain crosses the membrane as a helical span at residues 263–283 (IMLAVIVAFFLCWMPYHVLDL). Over 284 to 301 (IRSYGGESSSMVALKVDP) the chain is Extracellular. Residues 302–322 (LAISLAYVNSCLNPVLYVFMG) form a helical membrane-spanning segment. At 323-361 (QDFKNKVQLSLRRVFERAFSEEGTQISRSTQSQQVHSVL) the chain is on the cytoplasmic side.

Belongs to the G-protein coupled receptor 1 family.

The protein localises to the cell membrane. Its function is as follows. Receptor for the chemotactic and inflammatory peptide anaphylatoxin C3a. This receptor stimulates chemotaxis, granule enzyme release and superoxide anion production. The protein is C3a anaphylatoxin chemotactic receptor (c3ar1) of Danio rerio (Zebrafish).